The following is a 727-amino-acid chain: Phosphoribosylformylglycinamidine synthase subunit PurL (727 aa).

The active site involves histidine 47. ATP is bound by residues tyrosine 50 and lysine 89. A Mg(2+)-binding site is contributed by glutamate 91. Substrate contacts are provided by residues 92 to 95 and arginine 114; that span reads SHNH. Histidine 93 serves as the catalytic Proton acceptor. Aspartate 115 contacts Mg(2+). Glutamine 238 provides a ligand contact to substrate. Aspartate 266 is a Mg(2+) binding site. 310 to 312 lines the substrate pocket; sequence ESQ. Residues aspartate 490 and glycine 527 each coordinate ATP. Asparagine 528 serves as a coordination point for Mg(2+). Substrate is bound at residue serine 530.

The protein belongs to the FGAMS family. Monomer. Part of the FGAM synthase complex composed of 1 PurL, 1 PurQ and 2 PurS subunits.

It is found in the cytoplasm. It catalyses the reaction N(2)-formyl-N(1)-(5-phospho-beta-D-ribosyl)glycinamide + L-glutamine + ATP + H2O = 2-formamido-N(1)-(5-O-phospho-beta-D-ribosyl)acetamidine + L-glutamate + ADP + phosphate + H(+). It participates in purine metabolism; IMP biosynthesis via de novo pathway; 5-amino-1-(5-phospho-D-ribosyl)imidazole from N(2)-formyl-N(1)-(5-phospho-D-ribosyl)glycinamide: step 1/2. In terms of biological role, part of the phosphoribosylformylglycinamidine synthase complex involved in the purines biosynthetic pathway. Catalyzes the ATP-dependent conversion of formylglycinamide ribonucleotide (FGAR) and glutamine to yield formylglycinamidine ribonucleotide (FGAM) and glutamate. The FGAM synthase complex is composed of three subunits. PurQ produces an ammonia molecule by converting glutamine to glutamate. PurL transfers the ammonia molecule to FGAR to form FGAM in an ATP-dependent manner. PurS interacts with PurQ and PurL and is thought to assist in the transfer of the ammonia molecule from PurQ to PurL. This is Phosphoribosylformylglycinamidine synthase subunit PurL from Acidiphilium cryptum (strain JF-5).